We begin with the raw amino-acid sequence, 104 residues long: Large ribosomal subunit protein uL23 (104 aa).

Belongs to the universal ribosomal protein uL23 family. Part of the 50S ribosomal subunit. Contacts protein L29, and trigger factor when it is bound to the ribosome.

In terms of biological role, one of the early assembly proteins it binds 23S rRNA. One of the proteins that surrounds the polypeptide exit tunnel on the outside of the ribosome. Forms the main docking site for trigger factor binding to the ribosome. The sequence is that of Large ribosomal subunit protein uL23 from Ralstonia pickettii (strain 12J).